A 652-amino-acid chain; its full sequence is Protein phosphatase Slingshot homolog 3 (652 aa).

The span at 1–16 (MALVTVSRSPPASGHS) shows a compositional bias: polar residues. The disordered stretch occupies residues 1-31 (MALVTVSRSPPASGHSTPVGPTDRVIRRRGR). A2 is modified (N-acetylalanine). A phosphoserine mark is found at S9, S37, S85, and S87. The disordered stretch occupies residues 43–91 (GAVLGLQDGGEGNDAAEADPEPMEKPSGEEQPAEDQTDNGQGSQSPWKQ). Positions 80–90 (DNGQGSQSPWK) are enriched in polar residues. Residues 266-321 (EQMEQAILAELWQVLDASDLDSVTSKEIRQALELRLGCPLQQYRDFIDNQMLLLMA) enclose the DEK-C domain. Residues 325 to 466 (RASRIFPHLY…LQTYQGILTA (142 aa)) form the Tyrosine-protein phosphatase domain. Catalysis depends on C410, which acts as the Phosphocysteine intermediate. Disordered regions lie at residues 484 to 526 (EPLA…LGLR), 540 to 580 (LLEP…KGGQ), and 610 to 652 (RAFQ…EGKA). Positions 540 to 552 (LLEPSSEPESTTE) are enriched in low complexity. Residues 642 to 652 (SVDDSREEGKA) show a composition bias toward basic and acidic residues.

It belongs to the protein-tyrosine phosphatase family. In terms of assembly, does not bind to, or colocalize with, filamentous actin.

The protein localises to the cytoplasm. It is found in the cytoskeleton. It localises to the nucleus. The enzyme catalyses O-phospho-L-tyrosyl-[protein] + H2O = L-tyrosyl-[protein] + phosphate. It catalyses the reaction O-phospho-L-seryl-[protein] + H2O = L-seryl-[protein] + phosphate. The catalysed reaction is O-phospho-L-threonyl-[protein] + H2O = L-threonyl-[protein] + phosphate. Functionally, protein phosphatase which may play a role in the regulation of actin filament dynamics. Can dephosphorylate and activate the actin binding/depolymerizing factor cofilin, which subsequently binds to actin filaments and stimulates their disassembly. This chain is Protein phosphatase Slingshot homolog 3 (Ssh3), found in Rattus norvegicus (Rat).